The chain runs to 533 residues: MNASPTPTATTTTEPATAVVRCRTRLARRVVAAVGPDGLLPAPCESRVLESALALALLTEERAEADATARLTAYLRTTLRTAPPDPFQCAVARAVLGGAGERGERVGDEGDMDAGTALDAGLDGFDHFTAGRKRLMFRTVLAALGATGFPAVPWEAYDTRPQQSWLHMEMKALKVLAAHGTGHPDVVRDEDWRALLPALEPGPAWECNNLAQLLALLALRHSPRHRPALGDVLKHVAGRLRPDGGMPFIDGMTVFTTAAAGLALSLLPAPPACVTPMADALALRRNPDGGYGFHSGVAQSDVDDTCYVLEFLRRAAPDRHRTAVAEAEGYLLALRNPDGGFPTFARGTSSEIAMTAAAASALAHDPDRREEVDEAVRYVVRHQRPDGTFERSWSRNATNAVFRAVLALTGVAAHGEERRSRARAAERALAHLAATQNGDGGWGHAEAEPSDPISTAYAVIALARGPRARPGGPLDRALAYLVERQHPDGGYRSRPDQAGPRPLLYDVPALADVFVLLALAHATATPDPEGCSR.

Residues arginine 132, lysine 133, glutamine 163, and tryptophan 165 each coordinate (2E,6E)-farnesyl diphosphate. A Mg(2+)-binding site is contributed by glutamate 169. PFTB repeat units follow at residues 274 to 316 (VTPM…RRAA), 324 to 366 (VAEA…AHDP), 372 to 415 (VDEA…AAHG), 425 to 466 (AERA…ARGP), and 474 to 517 (LDRA…FVLL). Residue aspartate 303 is the Proton donor of the active site. Arginine 501 serves as a coordination point for (2E,6E)-farnesyl diphosphate.

Belongs to the terpene cyclase/mutase family. Mg(2+) is required as a cofactor. The cofactor is Ni(2+). It depends on Co(2+) as a cofactor.

It carries out the reaction (2E,6E)-farnesyl diphosphate = (5S,9S,10S)-drim-7-en-11-yl diphosphate. Its function is as follows. Catalyzes the cyclization of farnesyl diphosphate (FPP) to drimenyl diphosphate. Cannot use geranylgeranyl diphosphate (GGPP) as substrate. This is Drimenyl diphosphate synthase from Streptomyces showdoensis.